We begin with the raw amino-acid sequence, 663 residues long: Dual specificity protein phosphatase 8 (663 aa).

One can recognise a Rhodanese domain in the interval 23–138 (GPGGPLVIDS…FSSCFPGLCE (116 aa)). One can recognise a Tyrosine-protein phosphatase domain in the interval 160–302 (GLTRILPHLY…LLEYERSLKL (143 aa)). The Phosphocysteine intermediate role is filled by Cys-246. 2 disordered regions span residues 313–367 (LGTP…STAP) and 404–624 (YAPS…FKRR). 3 stretches are compositionally biased toward low complexity: residues 334-353 (STSE…REGS), 427-448 (LDSP…PDSV), and 546-557 (SAGAPGPGNSSS). Positions 558 to 577 (SGGGGGGGGGGGGGGGGGGS) are enriched in gly residues. Residues 578 to 600 (SSSNSSSSSSSSSSSSSSSSSSS) show a composition bias toward low complexity.

Belongs to the protein-tyrosine phosphatase family. Non-receptor class dual specificity subfamily. Monomer. As to expression, expressed predominantly in brain and lung.

It is found in the cytoplasm. Its subcellular location is the nucleus. The enzyme catalyses O-phospho-L-tyrosyl-[protein] + H2O = L-tyrosyl-[protein] + phosphate. It carries out the reaction O-phospho-L-seryl-[protein] + H2O = L-seryl-[protein] + phosphate. It catalyses the reaction O-phospho-L-threonyl-[protein] + H2O = L-threonyl-[protein] + phosphate. In terms of biological role, has phosphatase activity with synthetic phosphatase substrates and negatively regulates mitogen-activated protein kinase activity, presumably by catalysing their dephosphorylation. Expected to display protein phosphatase activity toward phosphotyrosine, phosphoserine and phosphothreonine residues. The protein is Dual specificity protein phosphatase 8 (Dusp8) of Mus musculus (Mouse).